The primary structure comprises 326 residues: Probable cell division protein WhiA (326 aa).

The H-T-H motif DNA-binding region spans 275–308; sequence SLDELGHYADPPMTKDAVAGRIRRLLAMADKRAS.

It belongs to the WhiA family.

Functionally, involved in cell division and chromosome segregation. This Leifsonia xyli subsp. xyli (strain CTCB07) protein is Probable cell division protein WhiA.